Consider the following 743-residue polypeptide: Envelope glycoprotein H (743 aa).

A signal peptide spans 1 to 23 (MRPGLPPYLTVFTVYLLSHLPSQ). Residues 24 to 720 (RYGADAASEA…VVDATDSRLL (697 aa)) lie on the Virion surface side of the membrane. N-linked (GlcNAc...) asparagine; by host glycosylation is found at Asn-56, Asn-63, Asn-68, and Asn-193. Residues 218–281 (YLMDELRYVK…QTEKHELLVL (64 aa)) form an interaction with gL region. Residues Asn-642 and Asn-701 are each glycosylated (N-linked (GlcNAc...) asparagine; by host). A helical membrane pass occupies residues 721–741 (MMSVYALSAIIGIYLLYRMLK). Residues 742–743 (TC) lie on the Intravirion side of the membrane.

It belongs to the herpesviridae glycoprotein H family. In terms of assembly, interacts with glycoprotein L (gL); this interaction is necessary for the correct processing and cell surface expression of gH. The heterodimer gH/gL seems to interact with gB trimers during fusion. Forms the envelope pentamer complex (PC) composed of gH, gL, UL128, UL130, and UL131A. The pentamer interacts with host NRP2. Forms the envelope trimer complex composed of gH, gL, and gO. The trimer interacts with host PDGFRA. The trimer also interacts with host EPHA2. Interacts with UL116. In terms of processing, N-glycosylated, O-glycosylated, and sialylated.

The protein resides in the virion membrane. The protein localises to the host cell membrane. It localises to the host endosome membrane. The heterodimer glycoprotein H-glycoprotein L is required for the fusion of viral and plasma membranes leading to virus entry into the host cell. Following initial binding to host receptor, membrane fusion is mediated by the fusion machinery composed of gB and the heterodimer gH/gL. May also be involved in the fusion between the virion envelope and the outer nuclear membrane during virion morphogenesis. In human cytomegalovirus, forms two distincts complexes to mediate viral entry, a trimer and a pentamer at the surface of the virion envelope. The gH-gL-gO trimer is required for infection in fibroblasts by interacting with host PDGFRA, and in glioblastoma cells by interacting with host EPHA2. The gH-gL-UL128-UL130-UL131A pentamer is essential for viral entry in epithelial, endothelial and myeloid cells via interaction with host NRP2. This chain is Envelope glycoprotein H, found in Human cytomegalovirus (strain AD169) (HHV-5).